We begin with the raw amino-acid sequence, 971 residues long: Nuclear factor NF-kappa-B p105 subunit (971 aa).

The RHD domain occupies 40–365 (PYLQILEQPK…EVQRKRQKLM (326 aa)). An S-nitrosocysteine; alternate modification is found at Cys59. The S-(15-deoxy-Delta12,14-prostaglandin J2-9-yl)cysteine; alternate moiety is linked to residue Cys59. Residue Lys323 forms a Glycyl lysine isopeptide (Lys-Gly) (interchain with G-Cter in SUMO2) linkage. Ser335 is modified (phosphoserine; by PKA). The Nuclear localization signal motif lies at 358–363 (QRKRQK). The segment at 370–392 (DSFGGGSGAGAGGGGMFGSGGGG) is GRR. Residues 433-971 (INTKFKNGPK…GQEGPIEGKI (539 aa)) form an interaction with CFLAR region. The residue at position 438 (Lys438) is an N6-acetyllysine; by EP300. The segment at 439–470 (NGPKDCAKSDDEESLTLPEKETEGEGPSLPMA) is disordered. A Phosphoserine modification is found at Ser447. ANK repeat units lie at residues 538–567 (NGDS…GLIS), 577–606 (LYQT…DLSL), 610–639 (WGNS…AAPL), 646–675 (EGLN…EVNA), 680–710 (SGRT…HVDS), and 714–743 (DGTT…DPLV). Positions 646–680 (EGLNAIHIAVMSNSLPCLLLLVAAGAEVNAQEQKS) are essential for interaction with HIF1AN. Position 674 is a (3S)-3-hydroxyasparagine; by HIF1AN (Asn674). Residue Ser755 is modified to Phosphoserine. The ANK 7 repeat unit spans residues 767 to 797 (PGTTPLDMAANWQVFDILNGKPYEPVFTSDD). One can recognise a Death domain in the interval 801–888 (QGDMKQLTED…EAIEVIQAAF (88 aa)). Ser896 carries the phosphoserine modification. Ser910 carries the phosphoserine; by GSK3-beta; in vitro modification. Ser926 is modified (phosphoserine). A phosphoserine; by IKKB mark is found at Ser930 and Ser935. Residue Ser940 is modified to Phosphoserine. The residue at position 946 (Thr946) is a Phosphothreonine.

As to quaternary structure, component of the NF-kappa-B p65-p50 complex. Homodimer; component of the NF-kappa-B p50-p50 complex. Component of the NF-kappa-B p105-p50 complex. Component of the NF-kappa-B p50-c-Rel complex. Component of a complex consisting of the NF-kappa-B p50-p50 homodimer and BCL3. Also interacts with MAP3K8. NF-kappa-B p50 subunit interacts with NCOA3 coactivator, which may coactivate NF-kappa-B dependent expression via its histone acetyltransferase activity. Interacts with TSC22D3; this interaction prevents nuclear translocation and DNA-binding. Interacts with SPAG9 and UNC5CL. NFKB1/p105 interacts with CFLAR; the interaction inhibits p105 processing into p50. NFKB1/p105 forms a ternary complex with MAP3K8 and TNIP2. Interacts with GSK3B; the interaction prevents processing of p105 to p50. NFKB1/p50 interacts with NFKBIE. NFKB1/p50 interacts with NFKBIZ. Nuclear factor NF-kappa-B p50 subunit interacts with NFKBID. Directly interacts with MEN1. Interacts with HIF1AN. Interacts with FEM1AA; interaction is direct. In terms of processing, generation of the NF-kappa-B p50 (Nuclear factor NF-kappa-B p50 subunit) transcription factor takes place both cotranslationally and post-translationally via non-mutually exclusive mechanisms. A cotranslational processing allows the production of both p50 and p105 (Nuclear factor NF-kappa-B p105 subunit) from a single NFKB1 mRNA. While translation occurs, the particular unfolded structure after the GRR repeat region acts as a substrate for the proteasome, promoting degradation of the C-terminus. The GRR acts as a proteasomal 'stop signal', protecting the region upstream of the GRR from degradation and promoting generation of p50. It is unclear if limited proteasome degradation during cotranslational processing depends on ubiquitination. NF-kappa-B p50 is also generated post-translationally following ubiquitination by the KPC complex, leading to limited processing by the proteasome downstream of the GRR region, thereby generating p50. Post-translationally, phosphorylation at the C-terminus by IKBKB/IKKB acts as a signal for ubiquitination and promotes either complete degradation or processing to generate the NF-kappa-B p50 (Nuclear factor NF-kappa-B p50 subunit). Phosphorylation at Ser-910 primes p105 for proteolytic processing in response to TNF-alpha stimulation. Phosphorylation at Ser-926, Ser-930 and Ser-935 are required for BTRC/BTRCP-mediated ubiquitination and proteolysis. Phosphorylation at Ser-930 is also required for ubiquitination by the KPC complex and limited processing to generate NF-kappa-B p50 (Nuclear factor NF-kappa-B p50 subunit). Polyubiquitinated at multiple Lys residues in the C-terminus. Polyubiquitinated by the SCF(FBXW11) and SCF(BTRC) complexes following phosphorylation at Ser-926, Ser-930 and Ser-935, leading to its complete degradation. In contrast, polyubiquitination by the KPC complex following phosphorylation at Ser-930 leads to limited proteosomal processing and generation of the active NF-kappa-B p50 (Nuclear factor NF-kappa-B p50 subunit). In terms of processing, S-nitrosylation of Cys-59 affects DNA binding. Post-translationally, the covalent modification of cysteine by 15-deoxy-Delta12,14-prostaglandin-J2 is autocatalytic and reversible. It may occur as an alternative to other cysteine modifications, such as S-nitrosylation and S-palmitoylation.

It is found in the cytoplasm. The protein resides in the nucleus. Its function is as follows. NF-kappa-B is a pleiotropic transcription factor present in almost all cell types and is the endpoint of a series of signal transduction events that are initiated by a vast array of stimuli related to many biological processes such as inflammation, immunity, differentiation, cell growth, tumorigenesis and apoptosis. NF-kappa-B is a homo- or heterodimeric complex formed by the Rel-like domain-containing proteins RELA/p65, RELB, NFKB1/p105, NFKB1/p50, REL and NFKB2/p52 and the heterodimeric p65-p50 complex appears to be most abundant one. The dimers bind at kappa-B sites in the DNA of their target genes and the individual dimers have distinct preferences for different kappa-B sites that they can bind with distinguishable affinity and specificity. Different dimer combinations act as transcriptional activators or repressors, respectively. NF-kappa-B is controlled by various mechanisms of post-translational modification and subcellular compartmentalization as well as by interactions with other cofactors or corepressors. NF-kappa-B complexes are held in the cytoplasm in an inactive state complexed with members of the NF-kappa-B inhibitor (I-kappa-B) family. In a conventional activation pathway, I-kappa-B is phosphorylated by I-kappa-B kinases (IKKs) in response to different activators, subsequently degraded thus liberating the active NF-kappa-B complex which translocates to the nucleus. NF-kappa-B heterodimeric p65-p50 and RelB-p50 complexes are transcriptional activators. The NF-kappa-B p50-p50 homodimer is a transcriptional repressor, but can act as a transcriptional activator when associated with BCL3. NFKB1 appears to have dual functions such as cytoplasmic retention of attached NF-kappa-B proteins by p105 and generation of p50 by a cotranslational processing. The proteasome-mediated process ensures the production of both p50 and p105 and preserves their independent function, although processing of NFKB1/p105 also appears to occur post-translationally. p50 binds to the kappa-B consensus sequence 5'-GGRNNYYCC-3', located in the enhancer region of genes involved in immune response and acute phase reactions. Plays a role in the regulation of apoptosis. In a complex with MAP3K8, NFKB1/p105 represses MAP3K8-induced MAPK signaling; active MAP3K8 is released by proteasome-dependent degradation of NFKB1/p105. Functionally, P105 is the precursor of the active p50 subunit (Nuclear factor NF-kappa-B p50 subunit) of the nuclear factor NF-kappa-B. Acts as a cytoplasmic retention of attached NF-kappa-B proteins by p105. In terms of biological role, constitutes the active form, which associates with RELA/p65 to form the NF-kappa-B p65-p50 complex to form a transcription factor. Together with RELA/p65, binds to the kappa-B consensus sequence 5'-GGRNNYYCC-3', located in the enhancer region of genes involved in immune response and acute phase reactions. Isoform 3 (p98) (but not p84 or p105) acts as a transactivator of NF-kappa-B-regulated gene expression. Its function is as follows. Acts as an inhibitor of transactivation of p50 NF-kappa-B subunit, probably by sequestering it in the cytoplasm. In Mus musculus (Mouse), this protein is Nuclear factor NF-kappa-B p105 subunit (Nfkb1).